The sequence spans 1165 residues: MEINNQNQCVPYNCLSNPKEIILGEERLETGNTVADISLGLINFLYSNFVPGGGFIVGLLELIWGFIGPSQWDIFLAQIEQLISQRIEEFARNQAISRLEGLSNLYKVYVRAFSDWEKDPTNPALREEMRIQFNDMNSALITAIPLFRVQNYEVALLSVYVQAANLHLSILRDVSVFGERWGYDTATINNRYSDLTSLIHVYTNHCVDTYNQGLRRLEGRFLSDWIVYNRFRRQLTISVLDIVAFFPNYDIRTYPIQTATQLTREVYLDLPFINENLSPAASYPTFSAAESAIIRSPHLVDFLNSFTIYTDSLARYAYWGGHLVNSFRTGTTTNLIRSPLYGREGNTERPVTITASPSVPIFRTLSYITGLDNSNPVAGIEGVEFQNTISRSIYRKSGPIDSFSELPPQDASVSPAIGYSHRLCHATFLERISGPRIAGTVFSWTHRSASPTNEVSPSRITQIPWVKAHTLASGASVIKGPGFTGGDILTRNSMGELGTLRVTFTGRLPQSYYIRFRYASVANRSGTFRYSQPPSYGISFPKTMDAGEPLTSRSFAHTTLFTPITFSRAQEEFDLYIQSGVYIDRIEFIPVTATFEAEYDLERAQKVVNALFTSTNQLGLKTDVTDYHIDQVSNLVACLSDEFCLDEKRELSEKVKHAKRLSDERNLLQDPNFRGINRQPDRGWRGSTDITIQGGDDVFKENYVTLPGTFDECYPTYLYQKIDESKLKAYTRYQLRGYIEDSQDLEIYLIRYNAKHEIVNVPGTGSLWPLSVENQIGPCGEPNRCAPHLEWNPDLHCSCRDGEKCAHHSHHFSLDIDVGCTDLNEDLGVWVIFKIKTQDGHARLGNLEFLEEKPLLGEALARVKRAEKKWRDKRETLQLETTIVYKEAKESVDALFVNSQYDRLQADTNIAMIHAADKRVHRIREAYLPELSVIPGVNAAIFEELEERIFTAFSLYDARNIIKNGDFNNGLLCWNVKGHVEVEEQNNHRSVLVIPEWEAEVSQEVRVCPGRGYILRVTAYKEGYGEGCVTIHEIENNTDELKFNNCVEEEVYPNNTVTCINYTATQEEYEGTYTSRNRGYDEAYGNNPSVPADYASVYEEKSYTDRRRENPCESNRGYGDYTPLPAGYVTKELEYFPETDKVWIEIGETEGTFIVDSVELLLMEE.

The protein belongs to the delta endotoxin family.

In terms of biological role, promotes colloidosmotic lysis by binding to the midgut epithelial cells of many lepidopteran larvae. The polypeptide is Pesticidal crystal protein Cry1Da (cry1Da) (Bacillus thuringiensis subsp. aizawai).